The following is a 330-amino-acid chain: tRNA (cytosine(38)-C(5))-methyltransferase (330 aa).

Residues leucine 7–phenylalanine 330 form the SAM-dependent MTase C5-type domain. Cysteine 81 is an active-site residue.

The protein belongs to the class I-like SAM-binding methyltransferase superfamily. C5-methyltransferase family.

It localises to the cytoplasm. The protein localises to the nucleus. It catalyses the reaction cytidine(38) in tRNA + S-adenosyl-L-methionine = 5-methylcytidine(38) in tRNA + S-adenosyl-L-homocysteine + H(+). Functionally, specifically methylates cytosine 38 in the anticodon loop of tRNA(Asp). Can also methylate cytosine 38 in tRNA(Glu), albeit to a lower level, but not tRNA(Lys). Pmt1-dependent tRNA methylation is induced by nitrogen limitation and depends on the nutrient-sensing protein kinase sck2. Does not have DNA-methylation activity. This Schizosaccharomyces pombe (strain 972 / ATCC 24843) (Fission yeast) protein is tRNA (cytosine(38)-C(5))-methyltransferase (pmt1).